A 205-amino-acid polypeptide reads, in one-letter code: Small ribosomal subunit protein uS4 (205 aa).

Residues 1 to 16 (MSKRETTKYKIDRRMG) are compositionally biased toward basic and acidic residues. Residues 1–46 (MSKRETTKYKIDRRMGENIWGRPKSPVNRRDYGPGQHGQRRKGKLS) form a disordered region. The 64-residue stretch at 94–157 (SRLDAVVYRA…KQLVLVLESV (64 aa)) folds into the S4 RNA-binding domain.

The protein belongs to the universal ribosomal protein uS4 family. Part of the 30S ribosomal subunit. Contacts protein S5. The interaction surface between S4 and S5 is involved in control of translational fidelity.

Its function is as follows. One of the primary rRNA binding proteins, it binds directly to 16S rRNA where it nucleates assembly of the body of the 30S subunit. In terms of biological role, with S5 and S12 plays an important role in translational accuracy. In Bartonella tribocorum (strain CIP 105476 / IBS 506), this protein is Small ribosomal subunit protein uS4.